Consider the following 262-residue polypeptide: 5'-nucleotidase SurE (262 aa).

A divalent metal cation is bound by residues D13, D14, S44, and N97.

The protein belongs to the SurE nucleotidase family. It depends on a divalent metal cation as a cofactor.

It is found in the cytoplasm. It carries out the reaction a ribonucleoside 5'-phosphate + H2O = a ribonucleoside + phosphate. Functionally, nucleotidase that shows phosphatase activity on nucleoside 5'-monophosphates. The sequence is that of 5'-nucleotidase SurE from Myxococcus xanthus (strain DK1622).